Here is a 118-residue protein sequence, read N- to C-terminus: uncharacterized protein (118 aa).

2 helical membrane passes run V7 to E27 and V34 to F58.

It localises to the membrane. This is an uncharacterized protein from Saccharomyces cerevisiae (strain ATCC 204508 / S288c) (Baker's yeast).